The following is a 491-amino-acid chain: Probable glycine dehydrogenase (decarboxylating) subunit 2 (491 aa).

Lys264 carries the N6-(pyridoxal phosphate)lysine modification.

This sequence belongs to the GcvP family. C-terminal subunit subfamily. The glycine cleavage system is composed of four proteins: P, T, L and H. In this organism, the P 'protein' is a heterodimer of two subunits. The cofactor is pyridoxal 5'-phosphate.

The enzyme catalyses N(6)-[(R)-lipoyl]-L-lysyl-[glycine-cleavage complex H protein] + glycine + H(+) = N(6)-[(R)-S(8)-aminomethyldihydrolipoyl]-L-lysyl-[glycine-cleavage complex H protein] + CO2. In terms of biological role, the glycine cleavage system catalyzes the degradation of glycine. The P protein binds the alpha-amino group of glycine through its pyridoxal phosphate cofactor; CO(2) is released and the remaining methylamine moiety is then transferred to the lipoamide cofactor of the H protein. The chain is Probable glycine dehydrogenase (decarboxylating) subunit 2 from Coxiella burnetii (strain Dugway 5J108-111).